Consider the following 306-residue polypeptide: Agmatinase (306 aa).

Residues His128, Asp151, His153, Asp155, Asp232, and Asp234 each coordinate Mn(2+).

This sequence belongs to the arginase family. Agmatinase subfamily. Requires Mn(2+) as cofactor.

The enzyme catalyses agmatine + H2O = urea + putrescine. It functions in the pathway amine and polyamine biosynthesis; putrescine biosynthesis via agmatine pathway; putrescine from agmatine: step 1/1. Functionally, catalyzes the formation of putrescine from agmatine. The chain is Agmatinase (speB) from Proteus mirabilis.